The primary structure comprises 149 residues: MKYQQLENLECGWKWKYLIKKWKDGEAVTRYIDTSEADAAIAELRKLEHEPTQVLAWIENHMSEALDNKLKQAIRAKRKRHFNAEQVHTKKKSIDLDYRVWEKLSNRANELGCTLSDAIEYLLSEASRSEKASMKVSSLKEDLSKLLSS.

This sequence belongs to the MatP family. As to quaternary structure, homodimer.

It is found in the cytoplasm. Required for spatial organization of the terminus region of the chromosome (Ter macrodomain) during the cell cycle. Prevents early segregation of duplicated Ter macrodomains during cell division. Binds specifically to matS, which is a 13 bp signature motif repeated within the Ter macrodomain. The sequence is that of Macrodomain Ter protein from Vibrio campbellii (strain ATCC BAA-1116).